The primary structure comprises 255 residues: Hydroxyacylglutathione hydrolase (255 aa).

Zn(2+)-binding residues include His53, His55, Asp57, His58, His111, Asp128, and His166.

The protein belongs to the metallo-beta-lactamase superfamily. Glyoxalase II family. Monomer. The cofactor is Zn(2+).

The enzyme catalyses an S-(2-hydroxyacyl)glutathione + H2O = a 2-hydroxy carboxylate + glutathione + H(+). It functions in the pathway secondary metabolite metabolism; methylglyoxal degradation; (R)-lactate from methylglyoxal: step 2/2. Its function is as follows. Thiolesterase that catalyzes the hydrolysis of S-D-lactoyl-glutathione to form glutathione and D-lactic acid. This Nitrosomonas eutropha (strain DSM 101675 / C91 / Nm57) protein is Hydroxyacylglutathione hydrolase.